The primary structure comprises 345 residues: Proto-oncogene serine/threonine-protein kinase mos (345 aa).

Positions 63–344 (VCLLQRLGAG…LDLRALQAEL (282 aa)) constitute a Protein kinase domain. ATP is bound by residues 69–77 (LGAGGFGSV) and Lys90. Residue Asp202 is the Proton acceptor of the active site.

This sequence belongs to the protein kinase superfamily. Ser/Thr protein kinase family. In terms of assembly, interacts with MAP2K1/MEK1. Restricted to gonadal tissues.

The protein resides in the cytoplasm. The catalysed reaction is L-seryl-[protein] + ATP = O-phospho-L-seryl-[protein] + ADP + H(+). The enzyme catalyses L-threonyl-[protein] + ATP = O-phospho-L-threonyl-[protein] + ADP + H(+). Serine/threonine kinase involved in the regulation of MAPK signaling. Is an activator of the ERK1/2 signaling cascade playing an essential role in the stimulation of oocyte maturation. The polypeptide is Proto-oncogene serine/threonine-protein kinase mos (Sus scrofa (Pig)).